Consider the following 312-residue polypeptide: Olfactory receptor 6B2 (312 aa).

Over 1–25 (MSGENVTKVSTFILVGLPTAPGLQY) the chain is Extracellular. Asparagine 5 carries an N-linked (GlcNAc...) asparagine glycan. A helical transmembrane segment spans residues 26-46 (LLFLLFLLTYLFVLVENLAII). The Cytoplasmic portion of the chain corresponds to 47-54 (LIVWSSTS). Residues 55-75 (LHRPMYYFLSSMSFLEIWYVS) traverse the membrane as a helical segment. At 76–99 (DITPKMLEGFLLQQKRISFVGCMT) the chain is on the extracellular side. Cysteine 97 and cysteine 189 are joined by a disulfide. Residues 100–120 (QLYFFSSLVCTECVLLASMAY) form a helical membrane-spanning segment. Over 121–139 (DRYVAICHPLRYHVLVTPG) the chain is Cytoplasmic. The chain crosses the membrane as a helical span at residues 140-160 (LCLQLVGFSFVSGFTISMIKV). Residues 161 to 196 (CFISSVTFCGSNVLNHFFCDISPILKLACTDFSTAE) lie on the Extracellular side of the membrane. The chain crosses the membrane as a helical span at residues 197-217 (LVDFILAFIILVFPLLATILS). Residues 218–237 (YWHITLAVLRIPSATGCWRA) lie on the Cytoplasmic side of the membrane. Residues 238–258 (FSTCASHLTVVTVFYTALLFM) form a helical membrane-spanning segment. The Extracellular segment spans residues 259–271 (YVRPQAIDSQSSN). Residues 272-292 (KLISAVYTVVTPIINPLIYCL) form a helical membrane-spanning segment. Over 293-312 (RNKEFKDALKKALGLGQTSH) the chain is Cytoplasmic.

It belongs to the G-protein coupled receptor 1 family.

Its subcellular location is the cell membrane. Odorant receptor. In Homo sapiens (Human), this protein is Olfactory receptor 6B2 (OR6B2).